We begin with the raw amino-acid sequence, 122 residues long: Proteasome assembly chaperone 3 (122 aa).

Met-1 carries the post-translational modification N-acetylmethionine.

It belongs to the PSMG3 family. Homodimer. Interacts directly with alpha and beta subunits of the 20S proteasome but dissociates before the formation of half-proteasomes, probably upon recruitment of POMP. Interacts with PSMG4.

Its function is as follows. Chaperone protein which promotes assembly of the 20S proteasome. May cooperate with PSMG1-PSMG2 heterodimers to orchestrate the correct assembly of proteasomes. This is Proteasome assembly chaperone 3 (Psmg3) from Mus musculus (Mouse).